Reading from the N-terminus, the 599-residue chain is NADH-ubiquinone oxidoreductase chain 5 (599 aa).

16 helical membrane passes run 1 to 21, 28 to 48, 81 to 101, 115 to 135, 171 to 191, 193 to 213, 233 to 253, 265 to 285, 302 to 322, 323 to 343, 363 to 383, 398 to 420, 455 to 475, 481 to 501, 510 to 530, and 577 to 597; these read MLELWGVLSLTSLGVMVIFLF, FAESVKYAGYMNAVLLSILLM, CFFVVGLYVTWNILMFSFYYM, GLFLIAMLLLVSAESLFQLLI, GDIGLLIMLMWSLVTLGDWSF, GLYALDFVNTFFLLGVVLAAA, TPVSSLLHSSTMVVAGVFLLI, IQLMVFFLGTMTTLFSAICAL, LGLMVTVVAGAGAPQLAFLHI, CMHAFFKAMLFMCSGGFIHGL, SVCFFIGSAALMGVPFLAGFF, NSWAVGLVLIATSFTAAYSVRLL, VIAGVVFIYFLSPNQISCLSL, LAAVFVTLVGGLIAWDVVNLL, IPELAFEAQVGFYPLIMHKLI, and LIKMYIAVMVMMGGLILGIMI.

Belongs to the complex I subunit 5 family.

The protein localises to the mitochondrion inner membrane. The catalysed reaction is a ubiquinone + NADH + 5 H(+)(in) = a ubiquinol + NAD(+) + 4 H(+)(out). In terms of biological role, core subunit of the mitochondrial membrane respiratory chain NADH dehydrogenase (Complex I) that is believed to belong to the minimal assembly required for catalysis. Complex I functions in the transfer of electrons from NADH to the respiratory chain. The immediate electron acceptor for the enzyme is believed to be ubiquinone. The sequence is that of NADH-ubiquinone oxidoreductase chain 5 (ND5) from Branchiostoma floridae (Florida lancelet).